The sequence spans 231 residues: CLAVATA3/ESR (CLE)-related protein 4B-2 (231 aa).

The signal sequence occupies residues 1–21; that stretch reads MATNTMLCLLILSVVLALAFA. Residues 21 to 83 form a required for secretion from the host cytoplasm to the host apoplasm region; the sequence is ATNKKGDEEP…SNQLPNNNWM (63 aa). Residue Asn-32 is glycosylated (N-linked (GlcNAc...) asparagine). Residues 116-231 form a disordered region; the sequence is RKTGMHSQRH…APAGPDPIHH (116 aa). Basic and acidic residues-rich tracts occupy residues 125-137 and 144-221; these read HHEE…EKRV and PIHH…EKRG. The A-1 repeat unit spans residues 127-135; that stretch reads EETTLEQEK. The 5 X approximate repeat A stretch occupies residues 127–219; the sequence is EETTLEQEKR…HEETTFEQEK (93 aa). A CLE-1 repeat occupies 136–147; sequence RVAGAGPDPIHH. Residues 136–231 are 5 X approximate repeat CLE; sequence RVAGAGPDPI…APAGPDPIHH (96 aa). The A-2 repeat unit spans residues 148–156; it reads EETTLEQEK. Residues 157–168 form a CLE-2 repeat; sequence RAVPAGPDPKHH. The stretch at 169 to 177 is one A-3 repeat; that stretch reads EETTLEQEK. The CLE-3 repeat unit spans residues 178-189; it reads RAVPAGPDPKHH. The A-4 repeat unit spans residues 190-198; that stretch reads EETTLEQEK. Residues 199-210 form a CLE-4 repeat; sequence RAVPAGPDPKHH. The stretch at 211 to 219 is one A-5 repeat; sequence EETTFEQEK. Residues 220–231 form a CLE-5 repeat; the sequence is RGAPAGPDPIHH.

It belongs to the CLV3/ESR signal peptide family. Highly expressed exclusively within the dorsal esophageal gland cell during syncytium formation in host plants.

It localises to the secreted. The protein resides in the host cytoplasm. Its subcellular location is the host extracellular space. The protein localises to the extracellular space. It is found in the apoplast. In terms of biological role, mimics host plant CLE extracellular signal peptides that regulate cell fate. May play a role in the differentiation or division of feeding cells (syncytia) induced in plant roots during infection. In Globodera rostochiensis (Golden nematode worm), this protein is CLAVATA3/ESR (CLE)-related protein 4B-2 (CLE-4B-2).